The chain runs to 430 residues: Adenylosuccinate synthetase (430 aa).

GTP-binding positions include 13–19 (GDEGKGK) and 41–43 (GHT). Asp-14 functions as the Proton acceptor in the catalytic mechanism. Mg(2+) is bound by residues Asp-14 and Gly-41. IMP is bound by residues 14 to 17 (DEGK), 39 to 42 (NAGH), Thr-130, Arg-144, Gln-225, Thr-240, and Arg-304. Residue His-42 is the Proton donor of the active site. Substrate is bound at residue 300 to 306 (ASTGRPR). GTP is bound by residues Arg-306, 332-334 (KLD), and 414-416 (STG).

It belongs to the adenylosuccinate synthetase family. As to quaternary structure, homodimer. The cofactor is Mg(2+).

The protein resides in the cytoplasm. It carries out the reaction IMP + L-aspartate + GTP = N(6)-(1,2-dicarboxyethyl)-AMP + GDP + phosphate + 2 H(+). It participates in purine metabolism; AMP biosynthesis via de novo pathway; AMP from IMP: step 1/2. Functionally, plays an important role in the de novo pathway of purine nucleotide biosynthesis. Catalyzes the first committed step in the biosynthesis of AMP from IMP. This chain is Adenylosuccinate synthetase, found in Xylella fastidiosa (strain 9a5c).